A 254-amino-acid chain; its full sequence is Sec-independent protein translocase protein TatC (254 aa).

The next 6 helical transmembrane spans lie at 40 to 60 (IFLS…FVKP), 82 to 104 (FFFV…FILY), 125 to 145 (VVLG…YALI), 172 to 192 (FVLL…IQVV), 210 to 230 (FVIL…DPLT), and 233 to 253 (LLAG…RLLG).

The protein belongs to the TatC family. In terms of assembly, forms a complex with TatA.

It is found in the cell inner membrane. Its function is as follows. Part of the twin-arginine translocation (Tat) system that transports large folded proteins containing a characteristic twin-arginine motif in their signal peptide across membranes. This is Sec-independent protein translocase protein TatC from Synechocystis sp. (strain ATCC 27184 / PCC 6803 / Kazusa).